Here is a 472-residue protein sequence, read N- to C-terminus: MSHQSELIAQDINAYLAQHEKKELLRFLTCGSVDDGKSTLIGRLLHDSKMIYEDQLEAVRADSSKHGTTGEKIDLALLVDGLQAEREQGITIDVAYRYFSTSKRKFIIADTPGHEQYTRNMATGASTCDLAIILIDARHGVMTQTRRHSYIASLLGIKHIVVAINKMDLLDFNESVFENIKADYLAFAAKLGMKDVMFVPISALDGDNVVNRSEKSAWYKGQTLMEILETVPIAGDKNYTDFRFPVQYVNRPNLDFRGFCGNVASGVVKVGDEVRVLPSGKTSHVKSIVTYDANLDEAFTGQAVTLTLTDEVDISRGDMLVLARDQVPQSNHVRAHLVWMTEKFMQPGSEYLFKFASKLVSGQIESIGYRVDVNTQEHSQVTHLQLNDIALVDVLLTQSVVADKYQQNRATGAFIVVDRLTNITVGAGMVVEQLQAEQTTPVNYSEFELELNALVRKHFPHWGAADLRKLLK.

Residues 22 to 239 (KELLRFLTCG…TVPIAGDKNY (218 aa)) form the tr-type G domain. The G1 stretch occupies residues 31–38 (GSVDDGKS). GTP is bound at residue 31–38 (GSVDDGKS). Residues 89–93 (GITID) are G2. The segment at 110-113 (DTPG) is G3. Residues 110-114 (DTPGH) and 165-168 (NKMD) contribute to the GTP site. The tract at residues 165-168 (NKMD) is G4. The interval 202 to 204 (SAL) is G5.

The protein belongs to the TRAFAC class translation factor GTPase superfamily. Classic translation factor GTPase family. CysN/NodQ subfamily. As to quaternary structure, heterodimer composed of CysD, the smaller subunit, and CysN.

It carries out the reaction sulfate + ATP + H(+) = adenosine 5'-phosphosulfate + diphosphate. It participates in sulfur metabolism; hydrogen sulfide biosynthesis; sulfite from sulfate: step 1/3. In terms of biological role, with CysD forms the ATP sulfurylase (ATPS) that catalyzes the adenylation of sulfate producing adenosine 5'-phosphosulfate (APS) and diphosphate, the first enzymatic step in sulfur assimilation pathway. APS synthesis involves the formation of a high-energy phosphoric-sulfuric acid anhydride bond driven by GTP hydrolysis by CysN coupled to ATP hydrolysis by CysD. This chain is Sulfate adenylyltransferase subunit 1, found in Cellvibrio japonicus (strain Ueda107) (Pseudomonas fluorescens subsp. cellulosa).